We begin with the raw amino-acid sequence, 393 residues long: Prokineticin receptor 1 (393 aa).

The Extracellular portion of the chain corresponds to 1–62 (METTVGALGE…TNSRTFFAAK (62 aa)). A glycan (N-linked (GlcNAc...) asparagine) is linked at N11. The chain crosses the membrane as a helical span at residues 63 to 83 (IVIGMALVGIMLVCGIGNFIF). Residues 84–98 (ITALARYKKLRNLTN) lie on the Cytoplasmic side of the membrane. Residues 99–119 (LLIANLAISDFLVAIVCCPFE) form a helical membrane-spanning segment. The Extracellular portion of the chain corresponds to 120–146 (MDYYVVRQLSWEHGHVLCASVNYLRTV). A disulfide bridge links C137 with C217. A helical transmembrane segment spans residues 147–167 (SLYVSTNALLAIAIDRYLAIV). At 168–179 (HPLRPRMKCQTA) the chain is on the cytoplasmic side. Residues 180–200 (AGLIFLVWSVSILIAIPAAYF) form a helical membrane-spanning segment. Topologically, residues 201 to 232 (TTETVLVIVERQEKIFCGQIWPVDQQFYYRSY) are extracellular. A helical transmembrane segment spans residues 233–253 (FLLVFGLEFVGPVVAMTLCYA). Topologically, residues 254–282 (RVSRELWFKAVPGFQTEQIRRRLRCRRRT) are cytoplasmic. A helical membrane pass occupies residues 283–303 (VLGLVCVLSAYVLCWAPFYGF). At 304-322 (TIVRDFFPSVFVKEKHYLT) the chain is on the extracellular side. A helical transmembrane segment spans residues 323–343 (AFYVVECIAMSNSMINTLCFV). Residues 344 to 393 (TVRNNTSKYLKRILRLQWRASPSGSKASADLDLRTTGIPATEEVDCIRLK) lie on the Cytoplasmic side of the membrane.

The protein belongs to the G-protein coupled receptor 1 family. As to expression, expressed at high levels in the heart, skeletal muscle and pancreas. Expressed at lower levels in the brain, lung, liver and kidney.

The protein resides in the cell membrane. Receptor for prokineticin 1. Exclusively coupled to the G(q) subclass of heteromeric G proteins. Activation leads to mobilization of calcium, stimulation of phosphoinositide turnover and activation of p44/p42 mitogen-activated protein kinase. May play a role during early pregnancy. The protein is Prokineticin receptor 1 (Prokr1) of Mus musculus (Mouse).